The following is a 706-amino-acid chain: Mitochondrial intermediate peptidase, mitochondrial (706 aa).

Residues 1–29 (MWKLTRRLQPHINSTRWLVRNFRNGGAGD) constitute a mitochondrion transit peptide. Residues 212-238 (NPTYRSTSGGSRGSTRSAHKSKQKGFR) form a disordered region. Residues 214–227 (TYRSTSGGSRGSTR) are compositionally biased toward low complexity. Residue His-491 coordinates Zn(2+). Residue Glu-492 is part of the active site. Zn(2+) contacts are provided by His-495 and Glu-520.

It belongs to the peptidase M3 family. Requires Zn(2+) as cofactor.

It localises to the mitochondrion. Its function is as follows. Aminopeptidase which cleaves preproteins, imported into the mitochondrion, to their mature size. Could cleave both preproteins and preprotein intermediates already cleaved by the mitochondrial processing peptidase (MPP). This Arabidopsis thaliana (Mouse-ear cress) protein is Mitochondrial intermediate peptidase, mitochondrial.